The following is a 105-amino-acid chain: uncharacterized protein (105 aa).

Transmembrane regions (helical) follow at residues 10–30 (YVVF…FKIG) and 48–68 (YPLA…YPPS).

The protein resides in the membrane. This is an uncharacterized protein from Acanthamoeba polyphaga mimivirus (APMV).